Consider the following 281-residue polypeptide: Undecaprenyl-diphosphatase (281 aa).

7 helical membrane-spanning segments follow: residues 49-69 (SANT…AWIF), 92-112 (LHIF…DDFI), 116-136 (LFSV…MIAA), 152-172 (MTYK…WPGF), 196-216 (TFIM…ASNI), 224-244 (ILFY…SIRL), and 257-277 (FAIY…GFGI).

The protein belongs to the UppP family.

The protein localises to the cell membrane. The catalysed reaction is di-trans,octa-cis-undecaprenyl diphosphate + H2O = di-trans,octa-cis-undecaprenyl phosphate + phosphate + H(+). Its function is as follows. Catalyzes the dephosphorylation of undecaprenyl diphosphate (UPP). Confers resistance to bacitracin. The protein is Undecaprenyl-diphosphatase of Macrococcus caseolyticus (strain JCSC5402) (Macrococcoides caseolyticum).